Consider the following 143-residue polypeptide: Large ribosomal subunit protein uL11 (143 aa).

The protein belongs to the universal ribosomal protein uL11 family. Part of the ribosomal stalk of the 50S ribosomal subunit. Interacts with L10 and the large rRNA to form the base of the stalk. L10 forms an elongated spine to which L12 dimers bind in a sequential fashion forming a multimeric L10(L12)X complex. One or more lysine residues are methylated.

Functionally, forms part of the ribosomal stalk which helps the ribosome interact with GTP-bound translation factors. The polypeptide is Large ribosomal subunit protein uL11 (Rhizorhabdus wittichii (strain DSM 6014 / CCUG 31198 / JCM 15750 / NBRC 105917 / EY 4224 / RW1) (Sphingomonas wittichii)).